A 224-amino-acid polypeptide reads, in one-letter code: Lipoprotein-releasing system ATP-binding protein LolD (224 aa).

The ABC transporter domain occupies 6–224; that stretch reads LEFCNVSKFF…IVNHSLISSI (219 aa). 43-50 provides a ligand contact to ATP; sequence GASGVGKT.

Belongs to the ABC transporter superfamily. Lipoprotein translocase (TC 3.A.1.125) family. The complex is composed of two ATP-binding proteins (LolD) and two transmembrane proteins (LolC and LolE).

The protein localises to the cell inner membrane. In terms of biological role, part of the ABC transporter complex LolCDE involved in the translocation of mature outer membrane-directed lipoproteins, from the inner membrane to the periplasmic chaperone, LolA. Responsible for the formation of the LolA-lipoprotein complex in an ATP-dependent manner. The polypeptide is Lipoprotein-releasing system ATP-binding protein LolD (Neorickettsia sennetsu (strain ATCC VR-367 / Miyayama) (Ehrlichia sennetsu)).